We begin with the raw amino-acid sequence, 212 residues long: MQFGLDFNLVEELVAGVDEVGRGPLCGPVVTAAVILDPARPIEGLNDSKKLTEARREALFDEIREKAVAWCIARAEVEEIDQLNILHATMLAMQRAVEGLSVTPRLALIDGNRCPQLAVPSAPVIQGDAQVPAIAAASILAKVSRDREMQALDLCYPGYGLAGHKGYPTPSHLEALRRLGPTPIHRRSFAPVRAMLEQVSIEVEVPASVLLV.

The 190-residue stretch at 12–201 (ELVAGVDEVG…VRAMLEQVSI (190 aa)) folds into the RNase H type-2 domain. Asp18, Glu19, and Asp110 together coordinate a divalent metal cation.

This sequence belongs to the RNase HII family. The cofactor is Mn(2+). Mg(2+) is required as a cofactor.

Its subcellular location is the cytoplasm. It catalyses the reaction Endonucleolytic cleavage to 5'-phosphomonoester.. Functionally, endonuclease that specifically degrades the RNA of RNA-DNA hybrids. The polypeptide is Ribonuclease HII (Stutzerimonas stutzeri (strain A1501) (Pseudomonas stutzeri)).